We begin with the raw amino-acid sequence, 417 residues long: S-adenosylmethionine synthase (417 aa).

His16 contacts ATP. Asp18 is a binding site for Mg(2+). Glu44 serves as a coordination point for K(+). 2 residues coordinate L-methionine: Glu57 and Gln100. The interval Gln100 to Ser110 is flexible loop. Residues Asp175 to Lys177, Lys251 to Phe252, Asp260, Arg266 to Lys267, Ala283, and Lys287 each bind ATP. Asp260 provides a ligand contact to L-methionine. Lys291 lines the L-methionine pocket.

The protein belongs to the AdoMet synthase family. In terms of assembly, homotetramer; dimer of dimers. The cofactor is Mg(2+). K(+) is required as a cofactor.

It is found in the cytoplasm. The catalysed reaction is L-methionine + ATP + H2O = S-adenosyl-L-methionine + phosphate + diphosphate. The protein operates within amino-acid biosynthesis; S-adenosyl-L-methionine biosynthesis; S-adenosyl-L-methionine from L-methionine: step 1/1. Its function is as follows. Catalyzes the formation of S-adenosylmethionine (AdoMet) from methionine and ATP. The overall synthetic reaction is composed of two sequential steps, AdoMet formation and the subsequent tripolyphosphate hydrolysis which occurs prior to release of AdoMet from the enzyme. The protein is S-adenosylmethionine synthase of Picosynechococcus sp. (strain ATCC 27264 / PCC 7002 / PR-6) (Agmenellum quadruplicatum).